Reading from the N-terminus, the 160-residue chain is MEEGSSSPVSPVDSLGTSEEELERQPKRFGRKRRYSKKSSEDGSPTPGKRGKKGSPSAQSFEELQSQRILANVRERQRTQSLNEAFAALRKIIPTLPSDKLSKIQTLKLAARYIDFLYQVLQSDEMDNKMTSCSYVAHERLSYAYSVWRMEGAWSMSASH.

The disordered stretch occupies residues 1 to 63 (MEEGSSSPVS…GSPSAQSFEE (63 aa)). The segment covering 27–37 (KRFGRKRRYSK) has biased composition (basic residues). The 52-residue stretch at 66–117 (SQRILANVRERQRTQSLNEAFAALRKIIPTLPSDKLSKIQTLKLAARYIDFL) folds into the bHLH domain.

Efficient DNA binding requires dimerization with another bHLH protein. Forms a heterodimer with TCF3/E12. Also interacts with MEF2C. As to expression, expressed at low levels in sclerotome and dermatome of somites, and in limb buds at 10.5 dpc. Accumulates predominantly in dermatome, prevertebrae and derivatives of branchial arches by 13 dpc. Also expressed near surface of embryo and in chondrogenic cells. In adult, expressed at low levels in skin, bladder, uterus, aorta and heart.

It is found in the nucleus. The protein resides in the cytoplasm. In terms of biological role, binds to the E-box consensus sequence 5'-CANNTG-3' as a heterodimer and inhibits transcriptional activation by MYOD1, MYOG, MEF2A and MEF2C. Also represses expression of pro-inflammatory cytokines such as TNFA and IL1B. Involved in postnatal glycogen storage and energy metabolism. Inhibits the premature or ectopic differentiation of preosteoblast cells during osteogenesis, possibly by changing the internal signal transduction response of osteoblasts to external growth factors. The chain is Twist-related protein 2 (Twist2) from Mus musculus (Mouse).